The sequence spans 78 residues: UPF0612 protein new22 (78 aa).

The protein belongs to the UPF0612 family.

The protein is UPF0612 protein new22 (new22) of Schizosaccharomyces pombe (strain 972 / ATCC 24843) (Fission yeast).